The sequence spans 118 residues: UPF0344 protein Aflv_2205 (118 aa).

A run of 4 helical transmembrane segments spans residues 4-24 (AHITTWVVALILFVVAIALQA), 32-52 (MLHMLLRLFYILIIATGAWIL), 60-80 (FLYIVKVIVGLWVIGTMEMIL), and 96-116 (FIVAFVVVLYLGFKLPFGFSF).

This sequence belongs to the UPF0344 family.

The protein localises to the cell membrane. This is UPF0344 protein Aflv_2205 from Anoxybacillus flavithermus (strain DSM 21510 / WK1).